The sequence spans 63 residues: Prokaryotic ubiquitin-like protein Pup (63 aa).

The tract at residues 1-28 (MPQEFEQIRSADQPLDSEESAPVAGART) is disordered. The tract at residues 19-57 (ESAPVAGARTDDTVDALDAVLDDIESVLETNAEEYVGSF) is ARC ATPase binding. Residue Glu63 forms an Isoglutamyl lysine isopeptide (Glu-Lys) (interchain with K-? in acceptor proteins) linkage.

This sequence belongs to the prokaryotic ubiquitin-like protein family. As to quaternary structure, strongly interacts with the proteasome-associated ATPase ARC through a hydrophobic interface; the interacting region of Pup lies in its C-terminal half. There is one Pup binding site per ARC hexamer ring.

Its pathway is protein degradation; proteasomal Pup-dependent pathway. In terms of biological role, protein modifier that is covalently attached to lysine residues of substrate proteins, thereby targeting them for proteasomal degradation. The tagging system is termed pupylation. In Bifidobacterium dentium (strain ATCC 27534 / DSM 20436 / JCM 1195 / Bd1), this protein is Prokaryotic ubiquitin-like protein Pup.